An 896-amino-acid chain; its full sequence is Rho GTPase-activating protein gacM (896 aa).

Residues 1–97 (MSSFIGWKKN…SSNDTIGKSS (97 aa)) form a disordered region. The span at 10 to 26 (NSNSGGTPGASPTSSSP) shows a compositional bias: low complexity. Residues 27 to 38 (LNSTISNANSVS) are compositionally biased toward polar residues. 2 stretches are compositionally biased toward low complexity: residues 45 to 57 (SISN…LSSS) and 65 to 97 (NSNN…GKSS). The region spanning 139–330 (QPINPNTEFG…LWIEEFDMIS (192 aa)) is the Rho-GAP domain. 4 stretches are compositionally biased toward low complexity: residues 375-391 (IQQQ…QSHP), 400-427 (SSLS…LLPT), 448-460 (PTPT…TPQT), and 473-506 (NNNS…NNNN). Disordered regions lie at residues 375-514 (IQQQ…GSPL) and 701-770 (LPTG…ENQI). Positions 702–711 (PTGSSWSDFE) are enriched in polar residues. Composition is skewed to low complexity over residues 712-743 (NNSS…NSSP) and 751-761 (SNGLNSSSNSN).

It is found in the cytoplasm. Functionally, rho GTPase-activating protein involved in the signal transduction pathway. This chain is Rho GTPase-activating protein gacM (gacM), found in Dictyostelium discoideum (Social amoeba).